The primary structure comprises 682 residues: Tail-specific protease (682 aa).

An N-terminal signal peptide occupies residues 1–22; the sequence is MNTFFRLTALAGLLALAGQSFA. The region spanning 238-322 is the PDZ domain; that stretch reads NTEMSLSLEG…SKVRLEILPA (85 aa). Catalysis depends on charge relay system residues Ser452, Asp463, and Lys477.

This sequence belongs to the peptidase S41A family.

Its subcellular location is the cell inner membrane. The catalysed reaction is The enzyme shows specific recognition of a C-terminal tripeptide, Xaa-Yaa-Zaa, in which Xaa is preferably Ala or Leu, Yaa is preferably Ala or Tyr, and Zaa is preferably Ala, but then cleaves at a variable distance from the C-terminus. A typical cleavage is -Ala-Ala-|-Arg-Ala-Ala-Lys-Glu-Asn-Tyr-Ala-Leu-Ala-Ala.. Involved in the cleavage of a C-terminal peptide of 11 residues from the precursor form of penicillin-binding protein 3 (PBP3). May be involved in protection of the bacterium from thermal and osmotic stresses. The chain is Tail-specific protease (prc) from Salmonella typhimurium (strain LT2 / SGSC1412 / ATCC 700720).